Here is a 254-residue protein sequence, read N- to C-terminus: MNPIAFHVGNLAIRWYGVIISMGTALGLLLAMYNCKIREASYDEFINMFLIAFPSAIIGARLYYVIFEFEDYRDNLINIFNTRQGGLAIHGGIIFGVLAVYIYLKYRKESFFEYVDVAAPSIILGQAIGRWGNFFNSEAHGGPVTKEFISKFPQFIQNGMFIEGTYYHPTFLYESIWNFIICIFLVYLLKKTKKKGIVFMAYIGLYSLGRFFIEGLRTDSLYLGSIRVAQLISVLGIILSIFFIYNIIKKEKRY.

4 helical membrane passes run Leu-11–Ala-31, Phe-49–Phe-69, Gln-84–Leu-104, and Glu-109–Gly-129. Arg-130 contributes to the a 1,2-diacyl-sn-glycero-3-phospho-(1'-sn-glycerol) binding site. A run of 3 helical transmembrane segments spans residues Pro-169–Leu-189, Gly-196–Leu-216, and Val-228–Ile-248.

Belongs to the Lgt family.

It localises to the cell membrane. The catalysed reaction is L-cysteinyl-[prolipoprotein] + a 1,2-diacyl-sn-glycero-3-phospho-(1'-sn-glycerol) = an S-1,2-diacyl-sn-glyceryl-L-cysteinyl-[prolipoprotein] + sn-glycerol 1-phosphate + H(+). It participates in protein modification; lipoprotein biosynthesis (diacylglyceryl transfer). Functionally, catalyzes the transfer of the diacylglyceryl group from phosphatidylglycerol to the sulfhydryl group of the N-terminal cysteine of a prolipoprotein, the first step in the formation of mature lipoproteins. This chain is Phosphatidylglycerol--prolipoprotein diacylglyceryl transferase, found in Clostridium botulinum (strain ATCC 19397 / Type A).